We begin with the raw amino-acid sequence, 322 residues long: GRB2-related adaptor protein 2 (322 aa).

Residues 1–56 (MEATAKFDFMASGEDELSFRTGDILKILSNQEEWLKAELGSQEGYVPKNFIDIEFP) enclose the SH3 1 domain. Tyr45 carries the phosphotyrosine modification. In terms of domain architecture, SH2 spans 58–149 (WFHEGLSRHQ…QKQVFLRDGT (92 aa)). Lys106 carries the post-translational modification N6-acetyllysine. The segment at 143–216 (VFLRDGTQDQ…TPGPQPPQQQ (74 aa)) is disordered. A compositionally biased stretch (basic and acidic residues) spans 148-163 (GTQDQGHRGNSLDRRS). Ser186 is modified (phosphoserine). The segment covering 193-204 (PQQFHPHQQPSP) has biased composition (low complexity). The residue at position 230 (Ser230) is a Phosphoserine. A Phosphothreonine modification is found at Thr254. Residues 263 to 322 (GRVRWARALYDFEALEEDELGFRSGEVVEVLDSSNPSWWTGRLHNKLGLFPANYVAPMMR) form the SH3 2 domain.

This sequence belongs to the GRB2/sem-5/DRK family. As to quaternary structure, interacts with phosphorylated LAT and LAX1 upon TCR activation. Interacts with SHB. Interacts with PTPN23. Interacts with phosphorylated LIME1 upon TCR activation.

The protein localises to the nucleus. It localises to the cytoplasm. It is found in the endosome. In terms of biological role, interacts with SLP-76 to regulate NF-AT activation. Binds to tyrosine-phosphorylated shc. The protein is GRB2-related adaptor protein 2 (Grap2) of Mus musculus (Mouse).